A 903-amino-acid polypeptide reads, in one-letter code: DNA transposase THAP9 (903 aa).

Residues 1 to 89 (MTRSCSAVGC…LKKGAVPSVS (89 aa)) form a THAP-type zinc finger. An HCFC1-binding motif (HBM) motif is present at residues 123-126 (DHNY).

Its function is as follows. Active transposase that specifically recognizes the bipartite 5'-TXXGGGX(A/T)-3' consensus motif and mediates transposition. The protein is DNA transposase THAP9 (THAP9) of Homo sapiens (Human).